We begin with the raw amino-acid sequence, 338 residues long: Outer membrane transporter protein TsaT (338 aa).

The first 22 residues, 1–22 (MNFRRRLCTAALIAALPLASQA), serve as a signal peptide directing secretion.

In terms of assembly, part of a two-component transport system composed of TsaT and TsaS.

Its subcellular location is the cell outer membrane. In terms of biological role, involved in the uptake of p-toluenesulphonate (TSA). Forms a large, general diffusion pore with a preference for anions. This is Outer membrane transporter protein TsaT (tsaT) from Comamonas testosteroni (Pseudomonas testosteroni).